We begin with the raw amino-acid sequence, 284 residues long: Efem/EfeO family lipoprotein (284 aa).

The first 17 residues, 1 to 17 (MKKLTTLLLASTLLIAA), serve as a signal peptide directing secretion. A lipid anchor (N-palmitoyl cysteine) is attached at C18. C18 carries the S-diacylglycerol cysteine lipid modification.

The protein belongs to the EfeM/EfeO family.

Its subcellular location is the cell membrane. This Staphylococcus aureus (strain NCTC 8325 / PS 47) protein is Efem/EfeO family lipoprotein.